Here is a 306-residue protein sequence, read N- to C-terminus: Pantothenate kinase (306 aa).

91 to 98 is a binding site for ATP; that stretch reads GSVAVGKS.

This sequence belongs to the prokaryotic pantothenate kinase family.

It localises to the cytoplasm. The enzyme catalyses (R)-pantothenate + ATP = (R)-4'-phosphopantothenate + ADP + H(+). It functions in the pathway cofactor biosynthesis; coenzyme A biosynthesis; CoA from (R)-pantothenate: step 1/5. This is Pantothenate kinase from Streptococcus equi subsp. equi (strain 4047).